The following is a 192-amino-acid chain: Probable apo-citrate lyase phosphoribosyl-dephospho-CoA transferase (192 aa).

This sequence belongs to the CitX family.

The enzyme catalyses apo-[citrate lyase ACP] + 2'-(5''-triphospho-alpha-D-ribosyl)-3'-dephospho-CoA = holo-[citrate lyase ACP] + diphosphate. Transfers 2-(5''-triphosphoribosyl)-3'-dephosphocoenzyme-A on a serine residue to the apo-acyl carrier protein (gamma chain) of the citrate lyase to yield holo-acyl carrier protein. The polypeptide is Probable apo-citrate lyase phosphoribosyl-dephospho-CoA transferase (Streptococcus pyogenes serotype M6 (strain ATCC BAA-946 / MGAS10394)).